The chain runs to 879 residues: DNA mismatch repair protein MutS (879 aa).

629-636 (GPNMAGKS) provides a ligand contact to ATP.

It belongs to the DNA mismatch repair MutS family.

Its function is as follows. This protein is involved in the repair of mismatches in DNA. It is possible that it carries out the mismatch recognition step. This protein has a weak ATPase activity. The sequence is that of DNA mismatch repair protein MutS from Ruegeria sp. (strain TM1040) (Silicibacter sp.).